The following is a 135-amino-acid chain: Large ribosomal subunit protein uL16c (135 aa).

It belongs to the universal ribosomal protein uL16 family. In terms of assembly, part of the 50S ribosomal subunit.

The protein localises to the plastid. Its subcellular location is the chloroplast. The polypeptide is Large ribosomal subunit protein uL16c (Morus indica (Mulberry)).